Here is a 193-residue protein sequence, read N- to C-terminus: Segregation and condensation protein B (193 aa).

Belongs to the ScpB family. In terms of assembly, homodimer. Homodimerization may be required to stabilize the binding of ScpA to the Smc head domains. Component of a cohesin-like complex composed of ScpA, ScpB and the Smc homodimer, in which ScpA and ScpB bind to the head domain of Smc. The presence of the three proteins is required for the association of the complex with DNA.

The protein localises to the cytoplasm. Its function is as follows. Participates in chromosomal partition during cell division. May act via the formation of a condensin-like complex containing Smc and ScpA that pull DNA away from mid-cell into both cell halves. The sequence is that of Segregation and condensation protein B from Clostridium botulinum (strain Kyoto / Type A2).